We begin with the raw amino-acid sequence, 260 residues long: Carbonic anhydrase 3 (260 aa).

Alanine 2 carries the post-translational modification N-acetylalanine. In terms of domain architecture, Alpha-carbonic anhydrase spans 3-259 (KEWGYADHNG…LKGRVVRASF (257 aa)). 4 positions are modified to phosphoserine: serine 29, serine 43, serine 50, and serine 55. The involved in proton transfer stretch occupies residues 64 to 67 (RTCR). Threonine 73 is subject to Phosphothreonine. 3 residues coordinate Zn(2+): histidine 94, histidine 96, and histidine 119. Tyrosine 127 is subject to Phosphotyrosine. Phosphothreonine occurs at positions 129 and 176. 2 positions are modified to S-glutathionyl cysteine: cysteine 182 and cysteine 187. 198-199 (TT) provides a ligand contact to substrate. A Phosphothreonine modification is found at threonine 216. Phosphoserine is present on serine 219.

It belongs to the alpha-carbonic anhydrase family. Zn(2+) serves as cofactor. In terms of processing, S-thiolated both by thiol-disulfide exchange with glutathione disulfide and by oxyradical-initiated S-thiolation with reduced glutathione. Post-translationally, S-glutathionylated in hepatocytes under oxidative stress.

The protein localises to the cytoplasm. The catalysed reaction is hydrogencarbonate + H(+) = CO2 + H2O. Inhibited by acetazolamide. Reversible hydration of carbon dioxide. The chain is Carbonic anhydrase 3 (CA3) from Equus caballus (Horse).